The following is a 328-amino-acid chain: dITP/XTP pyrophosphatase (328 aa).

The tract at residues 1–129 is unknown; the sequence is MSEKIYEYKD…ATSEQGFGDI (129 aa). Residues 130 to 324 form an NTP pyrophosphatase region; the sequence is ILIATRNEGK…KLMEVFPAWQ (195 aa). 134-139 serves as a coordination point for substrate; sequence TRNEGK. The Proton acceptor role is filled by Asp-196. Residue Asp-196 coordinates Mg(2+). Substrate contacts are provided by residues Ser-197, 280-283, Lys-303, and 308-309; these read FGYD and HR.

Belongs to the HAM1 NTPase family. In terms of assembly, homodimer. Mg(2+) serves as cofactor.

The catalysed reaction is XTP + H2O = XMP + diphosphate + H(+). The enzyme catalyses dITP + H2O = dIMP + diphosphate + H(+). It carries out the reaction ITP + H2O = IMP + diphosphate + H(+). Functionally, pyrophosphatase that catalyzes the hydrolysis of nucleoside triphosphates to their monophosphate derivatives, with a high preference for the non-canonical purine nucleotides XTP (xanthosine triphosphate), dITP (deoxyinosine triphosphate) and ITP. Seems to function as a house-cleaning enzyme that removes non-canonical purine nucleotides from the nucleotide pool, thus preventing their incorporation into DNA/RNA and avoiding chromosomal lesions. This is dITP/XTP pyrophosphatase from Streptococcus pyogenes serotype M1.